The primary structure comprises 260 residues: Taurine import ATP-binding protein TauB (260 aa).

The ABC transporter domain occupies 6-235 (AHQVSVVYAS…RYAAGESMRS (230 aa)). 40 to 47 (GASGCGKS) provides a ligand contact to ATP.

This sequence belongs to the ABC transporter superfamily. Taurine importer (TC 3.A.1.17.1) family. The complex is composed of two ATP-binding proteins (TauB), two transmembrane proteins (TauC) and a solute-binding protein (TauA).

The protein localises to the cell inner membrane. The catalysed reaction is taurine(out) + ATP + H2O = taurine(in) + ADP + phosphate + H(+). Functionally, part of the ABC transporter complex TauABC involved in taurine import. Responsible for energy coupling to the transport system. The protein is Taurine import ATP-binding protein TauB of Burkholderia thailandensis (strain ATCC 700388 / DSM 13276 / CCUG 48851 / CIP 106301 / E264).